The following is a 119-amino-acid chain: Large ribosomal subunit protein bL19 (119 aa).

This sequence belongs to the bacterial ribosomal protein bL19 family.

Functionally, this protein is located at the 30S-50S ribosomal subunit interface and may play a role in the structure and function of the aminoacyl-tRNA binding site. The protein is Large ribosomal subunit protein bL19 of Psychromonas ingrahamii (strain DSM 17664 / CCUG 51855 / 37).